Reading from the N-terminus, the 484-residue chain is CUGBP Elav-like family member 2 (484 aa).

2 necessary for nuclear export regions span residues 1–89 and 90–178; these read MNGA…PGMH and HPIQ…EGCS. RRM domains are found at residues 16-99, 108-188, and 399-477; these read IKTF…PADS, RKLF…FADT, and ANLF…LKRS. The interval 188-240 is necessary for splicing activity; it reads TQKDKEQRRLQQQLAQQMQQLNTATWGNLTGLGGLTPQYLALLQQATSSSNLG. The interval 347–399 is necessary for nuclear localization; that stretch reads GLTNGTAGTMDALTQAYSGIQQYAAAALPTLYSQSLLQQQSAAGSQKEGPEGA. Residues 426-484 are necessary for nuclear localization and splicing activity; the sequence is ISAKVFIDKQTNLSKCFGFVSYDNPVSAQAAIQAMNGFQIGMKRLKVQLKRSKNDSKPY.

This sequence belongs to the CELF/BRUNOL family. Expressed in heart.

The protein localises to the nucleus. Its subcellular location is the cytoplasm. In terms of biological role, RNA-binding protein implicated in the regulation of several post-transcriptional events. May be involved in mRNA translation repression and stability. Mediates exon inclusion in TNNT2 pre-mRNA. In Gallus gallus (Chicken), this protein is CUGBP Elav-like family member 2 (CELF2).